The following is a 300-amino-acid chain: Mitochondrial carnitine/acylcarnitine carrier-like protein (300 aa).

Solcar repeat units lie at residues 2-93, 102-201, and 211-298; these read ADAW…MEGL, LTIS…FKRF, and LGQG…TRSS. 6 helical membrane passes run 8-28, 64-84, 108-128, 176-195, 211-231, and 273-292; these read LASG…FDTI, GLYK…AVLF, FVAG…TELI, GLFP…FAAY, LGQG…WGIV, and GFGP…FLAY.

It belongs to the mitochondrial carrier (TC 2.A.29) family. High expression in cotyledons, leaves, flowers and developing siliques. Lower expression in roots and maturing siliques. Not detected in meristematic tissues.

It localises to the mitochondrion inner membrane. Involved in photorespiratory metabolism. Acts probably as a carrier for a glycine decarboxylase (GDC) cofactor or, alternatively, may act as a mitochondrial glycine shuttle. Involved in the transition from the embryonic stage to the juvenile autotrophic stage. This is Mitochondrial carnitine/acylcarnitine carrier-like protein (BOU) from Arabidopsis thaliana (Mouse-ear cress).